The chain runs to 833 residues: Leucine--tRNA ligase (833 aa).

The 'HIGH' region motif lies at 41 to 52; sequence PYPSGAGLHVGH. The short motif at 610 to 614 is the 'KMSKS' region element; the sequence is KMSKS. Lys613 serves as a coordination point for ATP.

Belongs to the class-I aminoacyl-tRNA synthetase family.

The protein localises to the cytoplasm. It carries out the reaction tRNA(Leu) + L-leucine + ATP = L-leucyl-tRNA(Leu) + AMP + diphosphate. The sequence is that of Leucine--tRNA ligase from Streptococcus pneumoniae serotype 4 (strain ATCC BAA-334 / TIGR4).